The following is a 296-amino-acid chain: LysM and putative peptidoglycan-binding domain-containing protein 4 (296 aa).

Over 1-217 (MRHEELLTKT…PMDGADCGIQ (217 aa)) the chain is Extracellular. The disordered stretch occupies residues 29 to 67 (KNGSGDSGDSSEEESHRVVLRPRGKERHKSGVHQPPQAG). The N-linked (GlcNAc...) asparagine glycan is linked to asparagine 30. A compositionally biased stretch (basic residues) spans 46–59 (VVLRPRGKERHKSG). One can recognise a LysM domain in the interval 74–118 (LQRELAQEDSLNKLALQYGCKVADIKKVNNFIREQDLYALKSVKI). Residues 218 to 238 (WWNAVFIMLLIGIVLPVFYLV) form a helical membrane-spanning segment. Residues 239-296 (YFKIQASGETPNSLNTTVIPNGSMAMGTVPGQAPRLAVAVPAVTSADSQFSQTTQAGS) lie on the Cytoplasmic side of the membrane.

Its subcellular location is the membrane. In Homo sapiens (Human), this protein is LysM and putative peptidoglycan-binding domain-containing protein 4 (LYSMD4).